The following is a 227-amino-acid chain: Fibrillarin-like rRNA/tRNA 2'-O-methyltransferase (227 aa).

S-adenosyl-L-methionine-binding positions include 86–87 (TT), 105–106 (EF), 130–131 (DA), and 150–153 (DVAQ).

This sequence belongs to the methyltransferase superfamily. Fibrillarin family. In terms of assembly, interacts with nop5. Component of box C/D small ribonucleoprotein (sRNP) particles that contain rpl7ae, FlpA and nop5, plus a guide RNA. These sRNP particles form homodimers, giving rise to an asymmetric holoenzyme.

Involved in pre-rRNA and tRNA processing. Utilizes the methyl donor S-adenosyl-L-methionine to catalyze the site-specific 2'-hydroxyl methylation of ribose moieties in rRNA and tRNA. Site specificity is provided by a guide RNA that base pairs with the substrate. Methylation occurs at a characteristic distance from the sequence involved in base pairing with the guide RNA. The chain is Fibrillarin-like rRNA/tRNA 2'-O-methyltransferase from Pyrococcus furiosus (strain ATCC 43587 / DSM 3638 / JCM 8422 / Vc1).